Consider the following 169-residue polypeptide: NAD(P)H-quinone oxidoreductase subunit J, chloroplastic (169 aa).

The protein belongs to the complex I 30 kDa subunit family. In terms of assembly, NDH is composed of at least 16 different subunits, 5 of which are encoded in the nucleus.

The protein resides in the plastid. Its subcellular location is the chloroplast thylakoid membrane. It catalyses the reaction a plastoquinone + NADH + (n+1) H(+)(in) = a plastoquinol + NAD(+) + n H(+)(out). It carries out the reaction a plastoquinone + NADPH + (n+1) H(+)(in) = a plastoquinol + NADP(+) + n H(+)(out). NDH shuttles electrons from NAD(P)H:plastoquinone, via FMN and iron-sulfur (Fe-S) centers, to quinones in the photosynthetic chain and possibly in a chloroplast respiratory chain. The immediate electron acceptor for the enzyme in this species is believed to be plastoquinone. Couples the redox reaction to proton translocation, and thus conserves the redox energy in a proton gradient. This Staurastrum punctulatum (Green alga) protein is NAD(P)H-quinone oxidoreductase subunit J, chloroplastic.